The following is a 511-amino-acid chain: 2,3-bisphosphoglycerate-independent phosphoglycerate mutase (511 aa).

D14 and S64 together coordinate Mn(2+). S64 acts as the Phosphoserine intermediate in catalysis. Residues H125, 155–156 (RD), R187, R193, 259–262 (RADR), and K333 contribute to the substrate site. Residues D400, H404, D441, H442, and H460 each coordinate Mn(2+).

The protein belongs to the BPG-independent phosphoglycerate mutase family. As to quaternary structure, monomer. Mn(2+) is required as a cofactor.

The enzyme catalyses (2R)-2-phosphoglycerate = (2R)-3-phosphoglycerate. It functions in the pathway carbohydrate degradation; glycolysis; pyruvate from D-glyceraldehyde 3-phosphate: step 3/5. Functionally, catalyzes the interconversion of 2-phosphoglycerate and 3-phosphoglycerate. The polypeptide is 2,3-bisphosphoglycerate-independent phosphoglycerate mutase (Pseudomonas putida (strain ATCC 47054 / DSM 6125 / CFBP 8728 / NCIMB 11950 / KT2440)).